The sequence spans 289 residues: ATP synthase gamma chain (289 aa).

It belongs to the ATPase gamma chain family. As to quaternary structure, F-type ATPases have 2 components, CF(1) - the catalytic core - and CF(0) - the membrane proton channel. CF(1) has five subunits: alpha(3), beta(3), gamma(1), delta(1), epsilon(1). CF(0) has three main subunits: a, b and c.

The protein localises to the cell inner membrane. In terms of biological role, produces ATP from ADP in the presence of a proton gradient across the membrane. The gamma chain is believed to be important in regulating ATPase activity and the flow of protons through the CF(0) complex. The chain is ATP synthase gamma chain from Histophilus somni (strain 129Pt) (Haemophilus somnus).